The primary structure comprises 610 residues: UvrABC system protein C (610 aa).

The GIY-YIG domain occupies 13-91 (HLPGVYRMYD…IKENQPKYNV (79 aa)). Residues 201 to 236 (GQVVEHLVQKMENAAQELDFEAAARFRDQIQSVRAV) form the UVR domain.

This sequence belongs to the UvrC family. Interacts with UvrB in an incision complex.

It is found in the cytoplasm. In terms of biological role, the UvrABC repair system catalyzes the recognition and processing of DNA lesions. UvrC both incises the 5' and 3' sides of the lesion. The N-terminal half is responsible for the 3' incision and the C-terminal half is responsible for the 5' incision. This Actinobacillus pleuropneumoniae serotype 5b (strain L20) protein is UvrABC system protein C.